A 608-amino-acid chain; its full sequence is Membrane protein insertase YidC (608 aa).

Residues 8–28 (LLLATALSFLVILGWYFFFPP) traverse the membrane as a helical segment. The tract at residues 33–61 (PQPATEVTETAPQGDTTAPAAAPSAGAAT) is disordered. 5 helical membrane passes run 378–398 (MGVA…PLAY), 448–468 (LPIL…FVTL), 482–502 (LSVP…WAAP), 506–526 (SLLS…SMWV), and 542–562 (IFAW…SGLV).

Belongs to the OXA1/ALB3/YidC family. Type 1 subfamily. Interacts with the Sec translocase complex via SecD. Specifically interacts with transmembrane segments of nascent integral membrane proteins during membrane integration.

The protein resides in the cell inner membrane. Functionally, required for the insertion and/or proper folding and/or complex formation of integral membrane proteins into the membrane. Involved in integration of membrane proteins that insert both dependently and independently of the Sec translocase complex, as well as at least some lipoproteins. Aids folding of multispanning membrane proteins. The polypeptide is Membrane protein insertase YidC (Ruegeria sp. (strain TM1040) (Silicibacter sp.)).